The following is a 208-amino-acid chain: Ypt/Rab-type GTPase ypt71 (208 aa).

GTP is bound by residues 17 to 23 (SGVGKTC), 33 to 40 (FSREYKAT), G66, 124 to 127 (NQID), and 158 to 160 (SAK). The Effector region signature appears at 37–45 (YKATIGADF). Residues C206 and C208 are each lipidated (S-geranylgeranyl cysteine). C208 is modified (cysteine methyl ester).

Belongs to the small GTPase superfamily. Rab family.

Its subcellular location is the vacuole membrane. Rab activation is generally mediated by a guanine exchange factor (GEF), while inactivation through hydrolysis of bound GTP is catalyzed by a GTPase activating protein (GAP). Its function is as follows. Ypt/Rab-type GTPases are key regulators of membrane trafficking and intracellular vesicular transport. They act as molecular switches that convert between GTP-bound and GDP-bound states, and regulate virtually all steps of membrane traffic from the formation of the transport vesicle at the donor membrane to its fusion at the target membrane. In the GDP-bound state, Ypt proteins are predominantly cytosolic, solubilized through the interaction with a GDP dissociation inhibitor (GDI). In the GTP-bound state, the proteins are membrane bound and interact with specific effector proteins that select cargo, promote vesicle movement, or verify the correct site of fusion. Act antagonistically to ypt7 in regulating vacuolar morphology, promoting vacuolar fission. This chain is Ypt/Rab-type GTPase ypt71 (ypt71), found in Schizosaccharomyces pombe (strain 972 / ATCC 24843) (Fission yeast).